Consider the following 148-residue polypeptide: UPF0251 protein Cbei_2962 (148 aa).

It belongs to the UPF0251 family.

This chain is UPF0251 protein Cbei_2962, found in Clostridium beijerinckii (strain ATCC 51743 / NCIMB 8052) (Clostridium acetobutylicum).